Reading from the N-terminus, the 309-residue chain is 2-phosphoglycerate kinase (309 aa).

One can recognise an ATP-cone domain in the interval 5 to 92 (NDIIVRGKSY…LWRMVLGRRP (88 aa)).

Belongs to the 2-phosphoglycerate kinase family. A divalent metal cation serves as cofactor.

The catalysed reaction is (2R)-2-phosphoglycerate + ATP = (2R)-2,3-bisphosphoglycerate + ADP + H(+). Its pathway is thermoadapter biosynthesis; cyclic 2,3-diphosphoglycerate biosynthesis; cyclic 2,3-diphosphoglycerate from 2-phospho-D-glycerate: step 1/2. Its function is as follows. Catalyzes the phosphorylation of 2-phosphoglycerate to 2,3-diphosphoglycerate. Involved in the biosynthesis of cyclic 2,3-bisphosphoglycerate, a thermoprotectant. This chain is 2-phosphoglycerate kinase, found in Methanocaldococcus jannaschii (strain ATCC 43067 / DSM 2661 / JAL-1 / JCM 10045 / NBRC 100440) (Methanococcus jannaschii).